We begin with the raw amino-acid sequence, 261 residues long: Transcription repressor OFP15 (261 aa).

The tract at residues 1 to 28 (MKLPFLNKNHSTSSYSSNSSSSSWPWPS) is disordered. The segment covering 11 to 28 (STSSYSSNSSSSSWPWPS) has biased composition (low complexity). Positions 112-172 (FSLESDDPYS…FAAFVDLLMN (61 aa)) constitute an OVATE domain.

Interacts with BLH1 and BLH3. As to expression, expressed in roots, cauline leaves, shoots, flower buds and siliques.

The protein resides in the nucleus. Transcriptional repressor that regulates multiple aspects of plant growth and development through the regulation of BEL1-LIKE (BLH) and KNOX TALE (KNAT) homeodomain transcription factors. The polypeptide is Transcription repressor OFP15 (OFP15) (Arabidopsis thaliana (Mouse-ear cress)).